The sequence spans 982 residues: Ubiquitin carboxyl-terminal hydrolase 15 (982 aa).

Residues 7–118 (VDLETQRSEV…SQQPIARKVV (112 aa)) enclose the DUSP domain. Residues 288–933 (CGLSNLGNTC…AAYVLFYQRQ (646 aa)) form the USP domain. Catalysis depends on C297, which acts as the Nucleophile. Residues 623-695 (TEENDGSLHC…DNDSENGLCT (73 aa)) form a disordered region. The span at 655 to 672 (METDEPDDESSQDQELPS) shows a compositional bias: acidic residues. H891 functions as the Proton acceptor in the catalytic mechanism. A disordered region spans residues 950 to 982 (QGASAATGAPHESDEESNEDENDIENENCMHTN). Residues 962 to 975 (SDEESNEDENDIEN) show a composition bias toward acidic residues.

The protein belongs to the peptidase C19 family.

It is found in the cytoplasm. The protein resides in the nucleus. The enzyme catalyses Thiol-dependent hydrolysis of ester, thioester, amide, peptide and isopeptide bonds formed by the C-terminal Gly of ubiquitin (a 76-residue protein attached to proteins as an intracellular targeting signal).. Hydrolase that removes conjugated ubiquitin from target proteins and regulates various pathways such as the TGF-beta receptor signaling and NF-kappa-B pathways. Acts as a key regulator of TGF-beta receptor signaling pathway, but the precise mechanism is still unclear: according to a report, acts by promoting deubiquitination of monoubiquitinated R-SMADs, thereby alleviating inhibition of R-SMADs and promoting activation of TGF-beta target genes. According to another reports, regulates the TGF-beta receptor signaling pathway by mediating deubiquitination and stabilization of tgfbr1, leading to an enhanced TGF-beta signal. May also regulate gene expression and/or DNA repair through the deubiquitination of histone H2B. Involved in endosome organization by mediating deubiquitination of rnf26 target(s), releasing vesicles that are restrained in the perinuclear region. The polypeptide is Ubiquitin carboxyl-terminal hydrolase 15 (usp15) (Xenopus tropicalis (Western clawed frog)).